We begin with the raw amino-acid sequence, 86 residues long: Mu-theraphotoxin-Hhn1b 3 (86 aa).

An N-terminal signal peptide occupies residues 1-21; that stretch reads MKASMFLALTGLALLFVVCYA. Positions 22-49 are excised as a propeptide; it reads SESEEKEFSNELLSSVLAVDDNSKGEER. Intrachain disulfides connect cysteine 51–cysteine 66, cysteine 58–cysteine 73, and cysteine 65–cysteine 80. At isoleucine 84 the chain carries Isoleucine amide.

It belongs to the neurotoxin 10 (Hwtx-1) family. 22 (Htx-4) subfamily. As to quaternary structure, monomer. Expressed by the venom gland.

Its subcellular location is the secreted. In terms of biological role, neurotoxin. Selectively blocks neuronal tetrodotoxin-sensitive voltage-gated sodium channels (Nav) with an IC(50) of 44.6 nM. Does not affect tetrodotoxin-resistant voltage-gated sodium channels or calcium channels. The polypeptide is Mu-theraphotoxin-Hhn1b 3 (Cyriopagopus hainanus (Chinese bird spider)).